The sequence spans 139 residues: Ribulose bisphosphate carboxylase small subunit (139 aa).

This sequence belongs to the RuBisCO small chain family. In terms of assembly, heterohexadecamer of 8 large and 8 small subunits.

The protein resides in the plastid. Its subcellular location is the chloroplast. Its function is as follows. RuBisCO catalyzes two reactions: the carboxylation of D-ribulose 1,5-bisphosphate, the primary event in carbon dioxide fixation, as well as the oxidative fragmentation of the pentose substrate in the photorespiration process. Both reactions occur simultaneously and in competition at the same active site. Although the small subunit is not catalytic it is essential for maximal activity. The protein is Ribulose bisphosphate carboxylase small subunit of Ectocarpus siliculosus (Brown alga).